A 217-amino-acid chain; its full sequence is Ribonuclease HII (217 aa).

The RNase H type-2 domain maps to 12-201 (DLVAGVDEVG…VRTAHEARAA (190 aa)). A divalent metal cation-binding residues include Asp-18, Glu-19, and Asp-110.

The protein belongs to the RNase HII family. Mn(2+) serves as cofactor. Requires Mg(2+) as cofactor.

It localises to the cytoplasm. It carries out the reaction Endonucleolytic cleavage to 5'-phosphomonoester.. In terms of biological role, endonuclease that specifically degrades the RNA of RNA-DNA hybrids. This chain is Ribonuclease HII, found in Pseudomonas syringae pv. tomato (strain ATCC BAA-871 / DC3000).